Here is a 436-residue protein sequence, read N- to C-terminus: 3-ketoacyl-CoA thiolase (436 aa).

Cys99 serves as the catalytic Acyl-thioester intermediate. Residues His392 and Cys422 each act as proton acceptor in the active site.

This sequence belongs to the thiolase-like superfamily. Thiolase family. As to quaternary structure, heterotetramer of two alpha chains (FadJ) and two beta chains (FadI).

The protein resides in the cytoplasm. It carries out the reaction an acyl-CoA + acetyl-CoA = a 3-oxoacyl-CoA + CoA. Its pathway is lipid metabolism; fatty acid beta-oxidation. Functionally, catalyzes the final step of fatty acid oxidation in which acetyl-CoA is released and the CoA ester of a fatty acid two carbons shorter is formed. The polypeptide is 3-ketoacyl-CoA thiolase (Shewanella frigidimarina (strain NCIMB 400)).